Here is a 255-residue protein sequence, read N- to C-terminus: Hydroxyacylglutathione hydrolase (255 aa).

Zn(2+)-binding residues include His56, His58, Asp60, His61, His114, Asp133, and His171.

It belongs to the metallo-beta-lactamase superfamily. Glyoxalase II family. As to quaternary structure, monomer. It depends on Zn(2+) as a cofactor.

It carries out the reaction an S-(2-hydroxyacyl)glutathione + H2O = a 2-hydroxy carboxylate + glutathione + H(+). The protein operates within secondary metabolite metabolism; methylglyoxal degradation; (R)-lactate from methylglyoxal: step 2/2. Its function is as follows. Thiolesterase that catalyzes the hydrolysis of S-D-lactoyl-glutathione to form glutathione and D-lactic acid. This Nitrobacter hamburgensis (strain DSM 10229 / NCIMB 13809 / X14) protein is Hydroxyacylglutathione hydrolase.